The chain runs to 184 residues: Troponin I, slow skeletal muscle (184 aa).

Proline 1 carries the post-translational modification N-acetylproline; partial. An involved in binding TNC region spans residues 1 to 45; it reads PEVERKSKITASRKLLKSLMLAKAKECQQEHEAREAEKVRYLAER. Phosphoserine is present on serine 55. The tract at residues 94–115 is involved in binding TNC and actin; that stretch reads LKLKVLDLRGKFKRPPLRRVRV.

It belongs to the troponin I family. In terms of assembly, binds to actin and tropomyosin. Post-translationally, in the muscle sample, approximately 25% of the chains were blocked. Pro-1 is probably acetylated. In terms of processing, the N-terminus is blocked.

Troponin I is the inhibitory subunit of troponin, the thin filament regulatory complex which confers calcium-sensitivity to striated muscle actomyosin ATPase activity. The protein is Troponin I, slow skeletal muscle (TNNI1) of Oryctolagus cuniculus (Rabbit).